The sequence spans 329 residues: ADP-L-glycero-D-manno-heptose-6-epimerase (329 aa).

Residues 10 to 11 (FI), 31 to 32 (DD), Lys-38, Lys-53, 74 to 78 (QGACS), and Asn-91 each bind NADP(+). Tyr-138 (proton acceptor) is an active-site residue. Lys-142 serves as a coordination point for NADP(+). Residue Asn-167 coordinates substrate. The NADP(+) site is built by Val-168 and Lys-176. The Proton acceptor role is filled by Lys-176. Substrate contacts are provided by residues Arg-178, His-185, 199-202 (FAGW), Arg-212, and Tyr-291.

The protein belongs to the NAD(P)-dependent epimerase/dehydratase family. HldD subfamily. In terms of assembly, homopentamer. NADP(+) is required as a cofactor.

The enzyme catalyses ADP-D-glycero-beta-D-manno-heptose = ADP-L-glycero-beta-D-manno-heptose. It participates in nucleotide-sugar biosynthesis; ADP-L-glycero-beta-D-manno-heptose biosynthesis; ADP-L-glycero-beta-D-manno-heptose from D-glycero-beta-D-manno-heptose 7-phosphate: step 4/4. Its pathway is bacterial outer membrane biogenesis; LPS core biosynthesis. Catalyzes the interconversion between ADP-D-glycero-beta-D-manno-heptose and ADP-L-glycero-beta-D-manno-heptose via an epimerization at carbon 6 of the heptose. The protein is ADP-L-glycero-D-manno-heptose-6-epimerase of Bordetella parapertussis (strain 12822 / ATCC BAA-587 / NCTC 13253).